The sequence spans 159 residues: Aphid transmission protein (159 aa).

Belongs to the caulimoviridae ORF II family.

Its function is as follows. This protein is involved in virus transmission. This Cauliflower mosaic virus (strain CM-1841) (CaMV) protein is Aphid transmission protein.